We begin with the raw amino-acid sequence, 270 residues long: Putative protein-disulfide oxidoreductase RT0103 (270 aa).

The first 17 residues, 1 to 17, serve as a signal peptide directing secretion; that stretch reads MKNIFIVLIFLFLSSCA. Residues 71–264 enclose the Thioredoxin domain; it reads SVLTQDLHEQ…ISRAVDRALE (194 aa). Cysteines 117 and 120 form a disulfide.

The protein belongs to the thioredoxin family. DsbA subfamily.

The protein localises to the periplasm. May be required for disulfide bond formation in some proteins. In Rickettsia typhi (strain ATCC VR-144 / Wilmington), this protein is Putative protein-disulfide oxidoreductase RT0103.